The primary structure comprises 632 residues: tRNA uridine 5-carboxymethylaminomethyl modification enzyme MnmG (632 aa).

FAD is bound by residues 15 to 20, Ile-127, and Ser-182; that span reads GAGHAG. 276 to 290 provides a ligand contact to NAD(+); sequence GPRYCPSIEDKIVRF. Gln-373 lines the FAD pocket.

This sequence belongs to the MnmG family. Homodimer. Heterotetramer of two MnmE and two MnmG subunits. Requires FAD as cofactor.

Its subcellular location is the cytoplasm. NAD-binding protein involved in the addition of a carboxymethylaminomethyl (cmnm) group at the wobble position (U34) of certain tRNAs, forming tRNA-cmnm(5)s(2)U34. This is tRNA uridine 5-carboxymethylaminomethyl modification enzyme MnmG from Streptococcus pyogenes serotype M6 (strain ATCC BAA-946 / MGAS10394).